The chain runs to 373 residues: Zinc finger protein CONSTANS (373 aa).

Residues 15 to 57 form a B box-type 1; atypical zinc finger; the sequence is NRARPCDTCRSNACTVYCHADSAYLCMSCDAQVHSANRVASRH. Zn(2+) is bound by residues C20, C23, C43, H48, C63, C66, C86, and H91. The B box-type 2; atypical zinc-finger motif lies at 58–108; that stretch reads KRVRVCESCERAPAAFLCEADDASLCTACDSEVHSANPLARRHQRVPILPI. Residues 109-120 are compositionally biased toward polar residues; that stretch reads SGNSFSSMTTTH. Residues 109–130 form a disordered region; sequence SGNSFSSMTTTHHQSEKTMTDP. Residues 121-130 show a composition bias toward basic and acidic residues; the sequence is HQSEKTMTDP. One can recognise a CCT domain in the interval 306–348; that stretch reads REARVLRYREKRKTRKFEKTIRYASRKAYAEIRPRVNGRFAKR.

This sequence belongs to the CONSTANS family. In terms of assembly, interacts with ADO3, SPA1, SPA2, SPA3 and SPA4. Interacts with MRG1 and MRG2 (via MRG domain). Interacts (via B-box) with MIP1A. Interacts with AS1 to form a functional complex regulating FT expression. Interacts with NFYC9. Component of a red light-dependent nuclear complex made of PHL, PHYB and CO. Interacts directly with PHL in the presence of PHYB. In terms of tissue distribution, expressed in leaves, shoots and shoot apical meristem. Detected in the vascular tissue of the hypocotyl, the cotyledons and the leaves. Restricted to the protoxylem and phloem in young inflorescence stems and to the phloem only in older inflorescences. Also detected in the vascular tissue of the root.

The protein resides in the nucleus. Transcription factor that acts in the long day flowering pathway and may mediate between the circadian clock and the control of flowering. Plays a role in the regulation of flowering time by acting on 'SUPPRESSOR OF OVEREXPRESSION OF CO1', 'TERMINAL FLOWER 1' and 'FLOWERING LOCUS T'. Also regulates P5CS2 and ACS10 (involved in proline and ethylene biosynthesis, respectively). Regulates the expression of NAKR1 by binding to the 5'-TGTG(N2-3)ATG-3' motif. In Arabidopsis thaliana (Mouse-ear cress), this protein is Zinc finger protein CONSTANS.